Here is a 434-residue protein sequence, read N- to C-terminus: Glutamyl-tRNA reductase (434 aa).

Residues 49 to 52 (TCNR), S109, 114 to 116 (EPQ), and Q120 contribute to the substrate site. The active-site Nucleophile is the C50. An NADP(+)-binding site is contributed by 189–194 (GAGEMC).

The protein belongs to the glutamyl-tRNA reductase family. As to quaternary structure, homodimer.

The catalysed reaction is (S)-4-amino-5-oxopentanoate + tRNA(Glu) + NADP(+) = L-glutamyl-tRNA(Glu) + NADPH + H(+). It functions in the pathway porphyrin-containing compound metabolism; protoporphyrin-IX biosynthesis; 5-aminolevulinate from L-glutamyl-tRNA(Glu): step 1/2. Catalyzes the NADPH-dependent reduction of glutamyl-tRNA(Glu) to glutamate 1-semialdehyde (GSA). The sequence is that of Glutamyl-tRNA reductase from Geobacter metallireducens (strain ATCC 53774 / DSM 7210 / GS-15).